Here is a 558-residue protein sequence, read N- to C-terminus: Phosphatidylserine lipase ABHD16A (558 aa).

A run of 2 helical transmembrane segments spans residues 60-80 and 93-113; these read ILALASVFWSISYYSSPFAFF and VVPFSHYAGTLLLLLAGVACL. Residues 114 to 558 are Cytoplasmic-facing; it reads RGIGRWTNPQ…AQHFQMPWHL (445 aa). The AB hydrolase-1 domain maps to 281–406; it reads LVICCEGNAG…ALVTRTVRQH (126 aa). Catalysis depends on charge relay system residues Ser355, Asp430, and His507.

This sequence belongs to the AB hydrolase superfamily. ABHD16 family.

It is found in the membrane. The enzyme catalyses 1-heptadecanoyl-2-(5Z,8Z,11Z,14Z-eicosatetraenoyl)-sn-glycero-3-phosphoserine + H2O = 1-heptadecanoyl-sn-glycero-3-phosphoserine + (5Z,8Z,11Z,14Z)-eicosatetraenoate + H(+). It catalyses the reaction 1-hexadecanoyl-2-(9Z-octadecenoyl)-sn-glycero-3-phospho-L-serine + H2O = 1-hexadecanoyl-sn-glycero-3-phospho-L-serine + (9Z)-octadecenoate + H(+). It carries out the reaction 1-octadecanoyl-2-(9Z,12Z-octadecadienoyl)-sn-glycero-3-phosphoserine + H2O = 1-octadecanoyl-sn-glycero-3-phosphoserine + (9Z,12Z)-octadecadienoate + H(+). The catalysed reaction is 1-heptadecanoyl-2-(5Z,8Z,11Z,14Z-eicosatetraenoyl)-sn-glycero-3-phosphocholine + H2O = 1-heptadecanoyl-sn-glycero-3-phosphocholine + (5Z,8Z,11Z,14Z)-eicosatetraenoate + H(+). The enzyme catalyses 1-hexadecanoyl-2-(9Z-octadecenoyl)-sn-glycero-3-phosphoglycerol + H2O = 1-hexadecanoyl-sn-glycero-3-phosphoglycerol + (9Z)-octadecenoate + H(+). It catalyses the reaction 1-hexadecanoyl-2-(9Z-octadecenoyl)-sn-glycero-3-phospho-(1D-myo-inositol) + H2O = 1-hexadecanoyl-sn-glycero-3-phospho-(1D-myo-inositol) + (9Z)-octadecenoate + H(+). It carries out the reaction 1-heptadecanoyl-2-(5Z,8Z,11Z,14Z-eicosatetraenoyl)-sn-glycero-3-phosphoethanolamine + H2O = 1-heptadecanoyl-sn-glycero-3-phosphoethanolamine + (5Z,8Z,11Z,14Z)-eicosatetraenoate + H(+). The catalysed reaction is 1-hexadecanoyl-2-(9Z-octadecenoyl)-sn-glycero-3-phospho-(1'-sn-glycerol) + H2O = 1-hexadecanoyl-sn-glycero-3-phospho-(1'-sn-glycerol) + (9Z)-octadecenoate + H(+). The enzyme catalyses Hydrolyzes glycerol monoesters of long-chain fatty acids.. It catalyses the reaction 1-tetradecanoylglycerol + H2O = tetradecanoate + glycerol + H(+). It carries out the reaction 2-hexadecanoylglycerol + H2O = glycerol + hexadecanoate + H(+). The catalysed reaction is 1-(9Z-octadecenoyl)-glycerol + H2O = glycerol + (9Z)-octadecenoate + H(+). The enzyme catalyses 2-(9Z-octadecenoyl)-glycerol + H2O = glycerol + (9Z)-octadecenoate + H(+). It catalyses the reaction 2-(9Z,12Z-octadecadienoyl)-glycerol + H2O = (9Z,12Z)-octadecadienoate + glycerol + H(+). It carries out the reaction 1-(5Z,8Z,11Z,14Z-eicosatetraenoyl)-glycerol + H2O = glycerol + (5Z,8Z,11Z,14Z)-eicosatetraenoate + H(+). The catalysed reaction is 2-(5Z,8Z,11Z,14Z-eicosatetraenoyl)-glycerol + H2O = glycerol + (5Z,8Z,11Z,14Z)-eicosatetraenoate + H(+). The enzyme catalyses prostaglandin D2-1-glycerol ester + H2O = prostaglandin D2 + glycerol + H(+). It catalyses the reaction 2-glyceryl-15-deoxy-Delta(12,14)-prostaglandin J2 + H2O = 15-deoxy-Delta(12,14)-prostaglandin J2 + glycerol + H(+). It carries out the reaction 1-(9Z,12Z-octadecadienoyl)-glycerol + H2O = (9Z,12Z)-octadecadienoate + glycerol + H(+). With respect to regulation, specifically inhibited by alpha-alkylidene-beta-lactone KC01 ((Z)-6-(2-Oxo-4-tridecyloxetan-3-ylidene)hexanamide). In terms of biological role, phosphatidylserine (PS) lipase that mediates the hydrolysis of phosphatidylserine to generate lysophosphatidylserine (LPS). LPS constitutes a class of signaling lipids that regulates immunological and neurological processes. Has no activity towards diacylglycerol, triacylglycerol or lysophosphatidylserine lipase. Also has monoacylglycerol lipase activity, with preference for 1-(9Z,12Z-octadecadienoyl)-glycerol (1-LG) and 2-glyceryl-15-deoxy-Delta(12,14)-prostaglandin J2 (15d-PGJ(2)-G). This Mus musculus (Mouse) protein is Phosphatidylserine lipase ABHD16A.